The chain runs to 467 residues: Glutamate--tRNA ligase (467 aa).

The 'HIGH' region motif lies at 9–19 (PSPTGYLHIGG). The 'KMSKS' region motif lies at 237-241 (KLSKR). Position 240 (Lys240) interacts with ATP.

This sequence belongs to the class-I aminoacyl-tRNA synthetase family. Glutamate--tRNA ligase type 1 subfamily. In terms of assembly, monomer.

Its subcellular location is the cytoplasm. The enzyme catalyses tRNA(Glu) + L-glutamate + ATP = L-glutamyl-tRNA(Glu) + AMP + diphosphate. Functionally, catalyzes the attachment of glutamate to tRNA(Glu) in a two-step reaction: glutamate is first activated by ATP to form Glu-AMP and then transferred to the acceptor end of tRNA(Glu). The sequence is that of Glutamate--tRNA ligase from Xanthomonas oryzae pv. oryzae (strain MAFF 311018).